A 270-amino-acid polypeptide reads, in one-letter code: Formamidopyrimidine-DNA glycosylase (270 aa).

P2 serves as the catalytic Schiff-base intermediate with DNA. E3 acts as the Proton donor in catalysis. K58 (proton donor; for beta-elimination activity) is an active-site residue. DNA contacts are provided by H91, R110, and R151. The FPG-type zinc finger occupies 236–270 (FVYGRGGMPCKLCGTTLREAKLGQRASVYCPRCQR). R260 functions as the Proton donor; for delta-elimination activity in the catalytic mechanism.

The protein belongs to the FPG family. Monomer. The cofactor is Zn(2+).

The enzyme catalyses Hydrolysis of DNA containing ring-opened 7-methylguanine residues, releasing 2,6-diamino-4-hydroxy-5-(N-methyl)formamidopyrimidine.. The catalysed reaction is 2'-deoxyribonucleotide-(2'-deoxyribose 5'-phosphate)-2'-deoxyribonucleotide-DNA = a 3'-end 2'-deoxyribonucleotide-(2,3-dehydro-2,3-deoxyribose 5'-phosphate)-DNA + a 5'-end 5'-phospho-2'-deoxyribonucleoside-DNA + H(+). Functionally, involved in base excision repair of DNA damaged by oxidation or by mutagenic agents. Acts as a DNA glycosylase that recognizes and removes damaged bases. Has a preference for oxidized purines, such as 7,8-dihydro-8-oxoguanine (8-oxoG). Has AP (apurinic/apyrimidinic) lyase activity and introduces nicks in the DNA strand. Cleaves the DNA backbone by beta-delta elimination to generate a single-strand break at the site of the removed base with both 3'- and 5'-phosphates. This is Formamidopyrimidine-DNA glycosylase from Pseudomonas putida (strain W619).